The primary structure comprises 337 residues: Lipoyl synthase (337 aa).

[4Fe-4S] cluster is bound by residues Cys-81, Cys-86, Cys-92, Cys-107, Cys-111, Cys-114, and Ser-323. Positions 93-312 (FSHGTATFMI…EEYGNALGFS (220 aa)) constitute a Radical SAM core domain.

Belongs to the radical SAM superfamily. Lipoyl synthase family. The cofactor is [4Fe-4S] cluster.

The protein localises to the cytoplasm. The enzyme catalyses [[Fe-S] cluster scaffold protein carrying a second [4Fe-4S](2+) cluster] + N(6)-octanoyl-L-lysyl-[protein] + 2 oxidized [2Fe-2S]-[ferredoxin] + 2 S-adenosyl-L-methionine + 4 H(+) = [[Fe-S] cluster scaffold protein] + N(6)-[(R)-dihydrolipoyl]-L-lysyl-[protein] + 4 Fe(3+) + 2 hydrogen sulfide + 2 5'-deoxyadenosine + 2 L-methionine + 2 reduced [2Fe-2S]-[ferredoxin]. The protein operates within protein modification; protein lipoylation via endogenous pathway; protein N(6)-(lipoyl)lysine from octanoyl-[acyl-carrier-protein]: step 2/2. Functionally, catalyzes the radical-mediated insertion of two sulfur atoms into the C-6 and C-8 positions of the octanoyl moiety bound to the lipoyl domains of lipoate-dependent enzymes, thereby converting the octanoylated domains into lipoylated derivatives. In Xanthomonas campestris pv. campestris (strain 8004), this protein is Lipoyl synthase.